The primary structure comprises 328 residues: Ethanol acetyltransferase 1 (328 aa).

The 271-residue stretch at 39–309 folds into the AB hydrolase-1 domain; that stretch reads PAIINIHGLL…TGHNLLLENP (271 aa). Residues Ser-115, Asp-139, and His-302 each act as charge relay system in the active site.

The protein belongs to the AB hydrolase superfamily.

The protein localises to the mitochondrion. It catalyses the reaction ethanol + acetyl-CoA = ethyl acetate + CoA. The catalysed reaction is acetyl-CoA + H2O = acetate + CoA + H(+). It carries out the reaction ethyl acetate + H2O = ethanol + acetate + H(+). Functionally, alcohol acetyltransferase that catalyzes the synthesis of ethyl acetate from ethanol and acetyl-CoA. Can also function as a thioesterase by hydrolyzing acetyl-CoA in the absence of ethanol, as well as esterase hydrolyzing ethyl acetate. In Saccharomyces cerevisiae (strain ATCC 204508 / S288c) (Baker's yeast), this protein is Ethanol acetyltransferase 1.